Consider the following 401-residue polypeptide: Mannonate dehydratase (401 aa).

It belongs to the mannonate dehydratase family. The cofactor is Fe(2+). Mn(2+) is required as a cofactor.

The enzyme catalyses D-mannonate = 2-dehydro-3-deoxy-D-gluconate + H2O. Its pathway is carbohydrate metabolism; pentose and glucuronate interconversion. Catalyzes the dehydration of D-mannonate. In Brucella canis (strain ATCC 23365 / NCTC 10854 / RM-666), this protein is Mannonate dehydratase.